Reading from the N-terminus, the 220-residue chain is Protein GrpE (220 aa).

The interval 1–55 (MCGGDVQGQGVASGCDEALERADSLRASDPVPVESGEGSVPGEHSQELETGASEE) is disordered.

The protein belongs to the GrpE family. As to quaternary structure, homodimer.

The protein resides in the cytoplasm. In terms of biological role, participates actively in the response to hyperosmotic and heat shock by preventing the aggregation of stress-denatured proteins, in association with DnaK and GrpE. It is the nucleotide exchange factor for DnaK and may function as a thermosensor. Unfolded proteins bind initially to DnaJ; upon interaction with the DnaJ-bound protein, DnaK hydrolyzes its bound ATP, resulting in the formation of a stable complex. GrpE releases ADP from DnaK; ATP binding to DnaK triggers the release of the substrate protein, thus completing the reaction cycle. Several rounds of ATP-dependent interactions between DnaJ, DnaK and GrpE are required for fully efficient folding. The chain is Protein GrpE from Treponema pallidum (strain Nichols).